Here is a 126-residue protein sequence, read N- to C-terminus: Acyl carrier protein 2, mitochondrial (126 aa).

The transit peptide at methionine 1 to phenylalanine 36 directs the protein to the mitochondrion. Positions serine 48–proline 123 constitute a Carrier domain. O-(pantetheine 4'-phosphoryl)serine is present on serine 83.

The protein belongs to the acyl carrier protein (ACP) family. As to quaternary structure, complex I is composed of at least 49 different subunits. Post-translationally, 4'-phosphopantetheine is transferred from CoA to a specific serine of the apo-ACP-like protein.

It is found in the mitochondrion. The protein operates within lipid metabolism; fatty acid biosynthesis. Functionally, carrier of the growing fatty acid chain in fatty acid biosynthesis. May be involved in the synthesis of short and medium chain fatty acids. Accessory and non-catalytic subunit of the mitochondrial membrane respiratory chain NADH dehydrogenase (Complex I), which functions in the transfer of electrons from NADH to the respiratory chain. This is Acyl carrier protein 2, mitochondrial (MTACP2) from Arabidopsis thaliana (Mouse-ear cress).